A 280-amino-acid polypeptide reads, in one-letter code: Phosphatidylglycerol--prolipoprotein diacylglyceryl transferase (280 aa).

The next 4 membrane-spanning stretches (helical) occupy residues Trp-30–Val-50, Phe-71–Tyr-91, Ile-106–Ile-126, and Ala-132–Phe-152. Residue Arg-154 coordinates a 1,2-diacyl-sn-glycero-3-phospho-(1'-sn-glycerol). 3 consecutive transmembrane segments (helical) span residues Gln-188–Tyr-208, Gly-217–Phe-237, and Trp-251–Ala-271.

The protein belongs to the Lgt family.

It localises to the cell inner membrane. It catalyses the reaction L-cysteinyl-[prolipoprotein] + a 1,2-diacyl-sn-glycero-3-phospho-(1'-sn-glycerol) = an S-1,2-diacyl-sn-glyceryl-L-cysteinyl-[prolipoprotein] + sn-glycerol 1-phosphate + H(+). It functions in the pathway protein modification; lipoprotein biosynthesis (diacylglyceryl transfer). Catalyzes the transfer of the diacylglyceryl group from phosphatidylglycerol to the sulfhydryl group of the N-terminal cysteine of a prolipoprotein, the first step in the formation of mature lipoproteins. The chain is Phosphatidylglycerol--prolipoprotein diacylglyceryl transferase from Sinorhizobium medicae (strain WSM419) (Ensifer medicae).